A 157-amino-acid polypeptide reads, in one-letter code: Transcriptional repressor NrdR (157 aa).

Residues 1–21 (MKCPHCGNNGSRVVDSRPTDE) are disordered. The segment at 3 to 34 (CPHCGNNGSRVVDSRPTDEGRVIRRRRECEKC) is a zinc-finger region. Positions 49-139 (LLVIKKNGSR…VYRQFKDMHV (91 aa)) constitute an ATP-cone domain.

The protein belongs to the NrdR family. It depends on Zn(2+) as a cofactor.

Functionally, negatively regulates transcription of bacterial ribonucleotide reductase nrd genes and operons by binding to NrdR-boxes. This is Transcriptional repressor NrdR from Pediococcus pentosaceus (strain ATCC 25745 / CCUG 21536 / LMG 10740 / 183-1w).